Reading from the N-terminus, the 404-residue chain is Probable tRNA sulfurtransferase (404 aa).

Residues 61–166 (EAVSERLKDV…SGYSYIMCDE (106 aa)) form the THUMP domain. Residues 184–185 (LL), 209–210 (HF), Arg-266, Gly-288, and Gln-297 each bind ATP.

It belongs to the ThiI family.

The protein localises to the cytoplasm. It carries out the reaction [ThiI sulfur-carrier protein]-S-sulfanyl-L-cysteine + a uridine in tRNA + 2 reduced [2Fe-2S]-[ferredoxin] + ATP + H(+) = [ThiI sulfur-carrier protein]-L-cysteine + a 4-thiouridine in tRNA + 2 oxidized [2Fe-2S]-[ferredoxin] + AMP + diphosphate. The catalysed reaction is [ThiS sulfur-carrier protein]-C-terminal Gly-Gly-AMP + S-sulfanyl-L-cysteinyl-[cysteine desulfurase] + AH2 = [ThiS sulfur-carrier protein]-C-terminal-Gly-aminoethanethioate + L-cysteinyl-[cysteine desulfurase] + A + AMP + 2 H(+). The protein operates within cofactor biosynthesis; thiamine diphosphate biosynthesis. Catalyzes the ATP-dependent transfer of a sulfur to tRNA to produce 4-thiouridine in position 8 of tRNAs, which functions as a near-UV photosensor. Also catalyzes the transfer of sulfur to the sulfur carrier protein ThiS, forming ThiS-thiocarboxylate. This is a step in the synthesis of thiazole, in the thiamine biosynthesis pathway. The sulfur is donated as persulfide by IscS. In Bacillus cereus (strain AH187), this protein is Probable tRNA sulfurtransferase.